Consider the following 1025-residue polypeptide: Multidrug resistance protein MdtC (1025 aa).

The next 12 membrane-spanning stretches (helical) occupy residues 3–23 (FFAL…AITL), 333–353 (EVEQ…FLFL), 360–380 (IIPA…MYLC), 387–407 (LSLM…IVVL), 431–451 (VGFT…PLLL), 463–483 (FAVT…TLTP), 528–548 (LVGV…ISIP), 853–873 (VILI…LYES), 875–895 (VHPL…LLAL), 897–917 (LFNA…IGIV), 953–973 (PIMM…LSGG), and 984–1004 (ITIV…TPVV).

This sequence belongs to the resistance-nodulation-cell division (RND) (TC 2.A.6) family. MdtC subfamily. Part of a tripartite efflux system composed of MdtA, MdtB and MdtC. MdtC forms a heteromultimer with MdtB.

Its subcellular location is the cell inner membrane. Functionally, the MdtABC tripartite complex confers resistance against novobiocin and deoxycholate. This chain is Multidrug resistance protein MdtC, found in Escherichia coli O1:K1 / APEC.